The chain runs to 333 residues: Phenylalanine--tRNA ligase alpha subunit (333 aa).

Glutamate 258 contributes to the Mg(2+) binding site.

The protein belongs to the class-II aminoacyl-tRNA synthetase family. Phe-tRNA synthetase alpha subunit type 1 subfamily. In terms of assembly, tetramer of two alpha and two beta subunits. Mg(2+) serves as cofactor.

The protein resides in the cytoplasm. It carries out the reaction tRNA(Phe) + L-phenylalanine + ATP = L-phenylalanyl-tRNA(Phe) + AMP + diphosphate + H(+). This is Phenylalanine--tRNA ligase alpha subunit from Wigglesworthia glossinidia brevipalpis.